The chain runs to 122 residues: Small ribosomal subunit protein bS16 (122 aa).

The interval 87–122 (AQSNPKKALPKKKAQERAAASAAAAEKAAAAAAPEA) is disordered. Over residues 103–122 (RAAASAAAAEKAAAAAAPEA) the composition is skewed to low complexity.

It belongs to the bacterial ribosomal protein bS16 family.

The sequence is that of Small ribosomal subunit protein bS16 from Methylocella silvestris (strain DSM 15510 / CIP 108128 / LMG 27833 / NCIMB 13906 / BL2).